A 278-amino-acid chain; its full sequence is Potassium/proton antiporter CemA (278 aa).

Helical transmembrane passes span 61–81 (LIVL…FIIG), 155–175 (AIKN…LIVL), 203–223 (IILF…EVVI), and 238–258 (FIFL…KYWI).

It belongs to the CemA family.

It is found in the plastid. The protein localises to the chloroplast inner membrane. It catalyses the reaction K(+)(in) + H(+)(out) = K(+)(out) + H(+)(in). Its function is as follows. Contributes to K(+)/H(+) antiport activity by supporting proton efflux to control proton extrusion and homeostasis in chloroplasts in a light-dependent manner to modulate photosynthesis. Prevents excessive induction of non-photochemical quenching (NPQ) under continuous-light conditions. Indirectly promotes efficient inorganic carbon uptake into chloroplasts. This Cyanidium caldarium (Red alga) protein is Potassium/proton antiporter CemA.